Here is a 263-residue protein sequence, read N- to C-terminus: HTH-type transcriptional repressor NanR (263 aa).

The disordered stretch occupies residues 1–25 (MDVMNAFDSQAEDSPTSLGRSLRRR). The HTH gntR-type domain maps to 30 to 98 (KKLSEMVEEE…NGERARVSRP (69 aa)). The H-T-H motif DNA-binding region spans 58 to 77 (ERELMAFFNVGRPSVREALA).

The protein belongs to the NanR family.

Its function is as follows. Transcriptional repressor that controls expression of the genes required for the catabolism of sialic acids. This chain is HTH-type transcriptional repressor NanR, found in Salmonella choleraesuis (strain SC-B67).